Reading from the N-terminus, the 350-residue chain is Protein SGT1 homolog A (350 aa).

TPR repeat units follow at residues 2-35, 37-69, and 71-103; these read AKEL…DPNC, EFFA…DPSL, and KAYL…TPSE. In terms of domain architecture, CS spans 149 to 238; it reads TAKYRHEYYQ…ADIITWASLE (90 aa). Residues 260-350 enclose the SGS domain; the sequence is AYPSSKKVKD…DGMELKKWEI (91 aa).

It belongs to the SGT1 family. As to quaternary structure, interacts with RAR1. Forms a ternary complex with RAR1 and barley HSP90.

In terms of biological role, functions in R gene-mediated resistance, but participates in a lower extent than SGT1B to RPP5-mediated resistance. Not required for RPM1, RPS2, RPS4 and RPS5-mediated resistance. Probably required for SCF-mediated ubiquitination, by coupling HSP90 to SCF complex for ubiquitination of HSP90 client proteins. The polypeptide is Protein SGT1 homolog A (SGT1A) (Arabidopsis thaliana (Mouse-ear cress)).